A 177-amino-acid chain; its full sequence is Large ribosomal subunit protein uL10 (177 aa).

Belongs to the universal ribosomal protein uL10 family. As to quaternary structure, part of the ribosomal stalk of the 50S ribosomal subunit. The N-terminus interacts with L11 and the large rRNA to form the base of the stalk. The C-terminus forms an elongated spine to which L12 dimers bind in a sequential fashion forming a multimeric L10(L12)X complex.

In terms of biological role, forms part of the ribosomal stalk, playing a central role in the interaction of the ribosome with GTP-bound translation factors. The polypeptide is Large ribosomal subunit protein uL10 (Legionella pneumophila (strain Paris)).